The sequence spans 93 residues: YcgL domain-containing protein KPK_1976 (93 aa).

The YcgL domain maps to 1–85 (MFCVIYRSTK…PSENLLKKHL (85 aa)).

This Klebsiella pneumoniae (strain 342) protein is YcgL domain-containing protein KPK_1976.